The chain runs to 460 residues: Muscarinic acetylcholine receptor M1 (460 aa).

At 1–22 the chain is on the extracellular side; sequence MNTSAPPAVSPNITVLAPGKGP. N-linked (GlcNAc...) asparagine glycans are attached at residues Asn-2 and Asn-12. The chain crosses the membrane as a helical span at residues 23–48; sequence WQVAFIGITTGLLSLATVTGNLLVLI. Over 49–62 the chain is Cytoplasmic; it reads SFKVNTELKTVNNY. The chain crosses the membrane as a helical span at residues 63–84; sequence FLLSLACADLIIGTFSMNLYTT. Topologically, residues 85 to 95 are extracellular; that stretch reads YLLMGHWALGT. A helical transmembrane segment spans residues 96–121; sequence LACDLWLALDYVASNASVMNLLLISF. A disulfide bridge links Cys-98 with Cys-178. The Cytoplasmic segment spans residues 122–142; it reads DRYFSVTRPLSYRAKRTPRRA. The chain crosses the membrane as a helical span at residues 143–164; the sequence is ALMIGLAWLVSFVLWAPAILFW. The Extracellular segment spans residues 165-185; it reads QYLVGERTVLAGQCYIQFLSQ. A helical transmembrane segment spans residues 186–209; that stretch reads PIITFGTAMAAFYLPVTVMCTLYW. The Cytoplasmic portion of the chain corresponds to 210–366; sequence RIYRETENRA…LVKEKKAART (157 aa). Disordered regions lie at residues 225-259, 273-297, and 310-351; these read LQGS…PGRC, SWKE…EEPG, and EAQA…QLAK. Thr-230 carries the post-translational modification Phosphothreonine. The span at 238 to 247 shows a compositional bias: low complexity; that stretch reads SSSSERSQPG. A compositionally biased stretch (basic residues) spans 328-343; the sequence is RPTKKGRDRAGKGQKP. A helical membrane pass occupies residues 367–390; sequence LSAILLAFILTWTPYNIMVLVSTF. Residues 391-401 lie on the Extracellular side of the membrane; the sequence is CKDCVPETLWE. A helical transmembrane segment spans residues 402 to 420; sequence LGYWLCYVNSTINPMCYAL. The Cytoplasmic segment spans residues 421 to 460; sequence CNKAFRDTFRLLLLCRWDKRRWRKIPKRPGSVHRTPSRQC. Thr-428 carries the phosphothreonine modification. The residue at position 451 (Ser-451) is a Phosphoserine. Thr-455 carries the phosphothreonine modification. A Phosphoserine modification is found at Ser-457.

The protein belongs to the G-protein coupled receptor 1 family. Muscarinic acetylcholine receptor subfamily. CHRM1 sub-subfamily. In terms of assembly, interacts with GPRASP2. Interacts with TMEM147.

The protein resides in the cell membrane. It is found in the postsynaptic cell membrane. Its function is as follows. The muscarinic acetylcholine receptor mediates various cellular responses, including inhibition of adenylate cyclase, breakdown of phosphoinositides and modulation of potassium channels through the action of G proteins. Primary transducing effect is Pi turnover. The chain is Muscarinic acetylcholine receptor M1 (CHRM1) from Macaca mulatta (Rhesus macaque).